The sequence spans 166 residues: uncharacterized protein (166 aa).

The disordered stretch occupies residues P25–H116. Phosphoserine is present on S105.

This is an uncharacterized protein from Rattus norvegicus (Rat).